A 347-amino-acid chain; its full sequence is NADH-ubiquinone oxidoreductase chain 2 (347 aa).

A run of 11 helical transmembrane segments spans residues Met1–Met21, His25–Met45, Phe60–Phe80, Met96–Pro116, Gly127–Pro147, Ile149–Gly169, Ile178–Pro198, Leu202–Ala222, Ile239–Gly259, Asn274–Met294, and Met326–Leu346.

Belongs to the complex I subunit 2 family. Core subunit of respiratory chain NADH dehydrogenase (Complex I) which is composed of 45 different subunits. Interacts with TMEM242.

Its subcellular location is the mitochondrion inner membrane. The enzyme catalyses a ubiquinone + NADH + 5 H(+)(in) = a ubiquinol + NAD(+) + 4 H(+)(out). Core subunit of the mitochondrial membrane respiratory chain NADH dehydrogenase (Complex I) that is believed to belong to the minimal assembly required for catalysis. Complex I functions in the transfer of electrons from NADH to the respiratory chain. The immediate electron acceptor for the enzyme is believed to be ubiquinone. The protein is NADH-ubiquinone oxidoreductase chain 2 of Suncus etruscus (Etruscan shrew).